Reading from the N-terminus, the 423-residue chain is AP-1 complex subunit mu-2 (423 aa).

The region spanning 168–421 (KNEVFIDVIE…ITQSGDYQLR (254 aa)) is the MHD domain.

It belongs to the adaptor complexes medium subunit family. In terms of assembly, adaptor protein complex 1 (AP-1) is a heterotetramer composed of two large adaptins (gamma-type subunit AP1G1 and beta-type subunit AP1B1), a medium adaptin (mu-type subunit AP1M1 or AP1M2) and a small adaptin (sigma-type subunit AP1S1 or AP1S2 or AP1S3). Interacts with P2X4. Post-translationally, phosphorylation of membrane-bound AP1M1/AP1M2 increases its affinity for sorting signals.

It is found in the golgi apparatus. It localises to the cytoplasmic vesicle. The protein localises to the clathrin-coated vesicle membrane. Functionally, subunit of clathrin-associated adaptor protein complex 1 that plays a role in protein sorting in the trans-Golgi network (TGN) and endosomes. The AP complexes mediate the recruitment of clathrin to membranes and the recognition of sorting signals within the cytosolic tails of transmembrane cargo molecules. The protein is AP-1 complex subunit mu-2 (Ap1m2) of Mus musculus (Mouse).